A 388-amino-acid chain; its full sequence is RNA binding motif protein, X-linked-like-1 (388 aa).

The 79-residue stretch at 8-86 (GKLFIGGLNT…KAIKVEQATK (79 aa)) folds into the RRM domain. Positions 61–80 (DAKDVARDMNGKSLDGKAIK) are enriched in basic and acidic residues. The disordered stretch occupies residues 61 to 388 (DAKDVARDMN…SDRGGGQKQI (328 aa)). A Glycyl lysine isopeptide (Lys-Gly) (interchain with G-Cter in SUMO2) cross-link involves residue lysine 80. Serine 88 carries the post-translational modification Phosphoserine. Residues 148 to 161 (RGPPPRSGGPPPKR) show a composition bias toward pro residues. Basic and acidic residues-rich tracts occupy residues 191–212 (PRREPLPSRRDVYLSPRDDGYS) and 238–271 (YTYRDYSHSSSRDDYPSRGYGDRDGYGRDREYSD). Low complexity predominate over residues 320–332 (SRDSYSSSRSDLY). 2 stretches are compositionally biased toward basic and acidic residues: residues 333–344 (SSDRDRVGRQER) and 377–388 (SRSDRGGGQKQI).

Its subcellular location is the nucleus. In terms of biological role, RNA-binding protein which may be involved in pre-mRNA splicing. The chain is RNA binding motif protein, X-linked-like-1 (Rbmxl1) from Rattus norvegicus (Rat).